Here is a 102-residue protein sequence, read N- to C-terminus: Large ribosomal subunit protein uL24 (102 aa).

This sequence belongs to the universal ribosomal protein uL24 family. As to quaternary structure, part of the 50S ribosomal subunit.

Functionally, one of two assembly initiator proteins, it binds directly to the 5'-end of the 23S rRNA, where it nucleates assembly of the 50S subunit. Its function is as follows. One of the proteins that surrounds the polypeptide exit tunnel on the outside of the subunit. The sequence is that of Large ribosomal subunit protein uL24 from Rhizobium etli (strain CIAT 652).